We begin with the raw amino-acid sequence, 451 residues long: Glycine--tRNA ligase (451 aa).

Residues R94 and E164 each contribute to the substrate site. ATP is bound by residues 196–198 (RNE), 206–211 (FRTREF), 281–282 (EL), and 325–328 (GVER). Position 211–215 (211–215 (FEQME)) interacts with substrate. 321-325 (EPSVG) contributes to the substrate binding site.

It belongs to the class-II aminoacyl-tRNA synthetase family. In terms of assembly, homodimer.

Its subcellular location is the cytoplasm. The enzyme catalyses tRNA(Gly) + glycine + ATP = glycyl-tRNA(Gly) + AMP + diphosphate. Catalyzes the attachment of glycine to tRNA(Gly). The protein is Glycine--tRNA ligase of Mesoplasma florum (strain ATCC 33453 / NBRC 100688 / NCTC 11704 / L1) (Acholeplasma florum).